The sequence spans 240 residues: UDP-2,3-diacylglucosamine hydrolase (240 aa).

Positions 8, 10, 41, 79, and 114 each coordinate Mn(2+). Residue 79–80 (NR) coordinates substrate. Substrate-binding residues include D122, S160, N164, K167, and H195. Mn(2+) contacts are provided by H195 and H197.

The protein belongs to the LpxH family. Mn(2+) is required as a cofactor.

The protein localises to the cell inner membrane. It catalyses the reaction UDP-2-N,3-O-bis[(3R)-3-hydroxytetradecanoyl]-alpha-D-glucosamine + H2O = 2-N,3-O-bis[(3R)-3-hydroxytetradecanoyl]-alpha-D-glucosaminyl 1-phosphate + UMP + 2 H(+). It functions in the pathway glycolipid biosynthesis; lipid IV(A) biosynthesis; lipid IV(A) from (3R)-3-hydroxytetradecanoyl-[acyl-carrier-protein] and UDP-N-acetyl-alpha-D-glucosamine: step 4/6. In terms of biological role, hydrolyzes the pyrophosphate bond of UDP-2,3-diacylglucosamine to yield 2,3-diacylglucosamine 1-phosphate (lipid X) and UMP by catalyzing the attack of water at the alpha-P atom. Involved in the biosynthesis of lipid A, a phosphorylated glycolipid that anchors the lipopolysaccharide to the outer membrane of the cell. The chain is UDP-2,3-diacylglucosamine hydrolase from Escherichia coli (strain SE11).